Here is a 262-residue protein sequence, read N- to C-terminus: Glutamate 5-kinase (262 aa).

Lysine 14 lines the ATP pocket. Substrate contacts are provided by serine 54, aspartate 141, and asparagine 153. Residues 173-174 and 214-220 contribute to the ATP site; these read SD and TGGMVTK.

This sequence belongs to the glutamate 5-kinase family.

It is found in the cytoplasm. It catalyses the reaction L-glutamate + ATP = L-glutamyl 5-phosphate + ADP. It functions in the pathway amino-acid biosynthesis; L-proline biosynthesis; L-glutamate 5-semialdehyde from L-glutamate: step 1/2. In terms of biological role, catalyzes the transfer of a phosphate group to glutamate to form L-glutamate 5-phosphate. This chain is Glutamate 5-kinase, found in Symbiobacterium thermophilum (strain DSM 24528 / JCM 14929 / IAM 14863 / T).